The primary structure comprises 635 residues: Biosynthetic arginine decarboxylase (635 aa).

Lys-100 carries the N6-(pyridoxal phosphate)lysine modification. 282 to 292 (VDIGGGLGVDY) provides a ligand contact to substrate.

It belongs to the Orn/Lys/Arg decarboxylase class-II family. SpeA subfamily. Requires Mg(2+) as cofactor. Pyridoxal 5'-phosphate is required as a cofactor.

It catalyses the reaction L-arginine + H(+) = agmatine + CO2. It participates in amine and polyamine biosynthesis; agmatine biosynthesis; agmatine from L-arginine: step 1/1. Its function is as follows. Catalyzes the biosynthesis of agmatine from arginine. The protein is Biosynthetic arginine decarboxylase of Geobacter metallireducens (strain ATCC 53774 / DSM 7210 / GS-15).